Reading from the N-terminus, the 179-residue chain is Large ribosomal subunit protein uL5 (179 aa).

Belongs to the universal ribosomal protein uL5 family. Part of the 50S ribosomal subunit; part of the 5S rRNA/L5/L18/L25 subcomplex. Contacts the 5S rRNA and the P site tRNA. Forms a bridge to the 30S subunit in the 70S ribosome.

Its function is as follows. This is one of the proteins that bind and probably mediate the attachment of the 5S RNA into the large ribosomal subunit, where it forms part of the central protuberance. In the 70S ribosome it contacts protein S13 of the 30S subunit (bridge B1b), connecting the 2 subunits; this bridge is implicated in subunit movement. Contacts the P site tRNA; the 5S rRNA and some of its associated proteins might help stabilize positioning of ribosome-bound tRNAs. The protein is Large ribosomal subunit protein uL5 of Verminephrobacter eiseniae (strain EF01-2).